The sequence spans 740 residues: Zinc finger CCCH domain-containing protein 14 (740 aa).

Disordered stretches follow at residues 82–240 (SNKQ…NIKG), 254–314 (VSAG…DDAV), 390–426 (ITPS…DDEE), and 444–469 (SFRD…HHST). Basic and acidic residues-rich tracts occupy residues 87–158 (ETSK…EIQR) and 176–185 (EHVRARGEKH). The span at 186-200 (DRHHHKDHRRGRSHE) shows a compositional bias: basic residues. Over residues 204-214 (ITSTIVRQASA) the composition is skewed to polar residues. Polar residues predominate over residues 393–409 (SRDSTPTDDSPTMQKWN). Over residues 414–426 (IGDDSEESEDDEE) the composition is skewed to acidic residues. 2 consecutive C3H1-type zinc fingers follow at residues 499–522 (HVKE…MHPT) and 523–543 (TNCK…IHPP). The segment at 623–661 (IKKKPAPGAESEKKEEKSDENESKAEEPKAEVAPVQPKP) is disordered. Positions 632 to 652 (ESEKKEEKSDENESKAEEPKA) are enriched in basic and acidic residues. C3H1-type zinc fingers lie at residues 668 to 691 (LHSM…KHPK), 674 to 691 (CRYA…KHPK), and 693 to 709 (CRFG…FYHK).

The protein belongs to the ZC3H14 family.

The protein resides in the nucleus. It localises to the cytoplasm. RNA-binding protein involved in the biogenesis of circular RNAs (circRNAs), which are produced by back-splicing circularization of pre-mRNAs. The polypeptide is Zinc finger CCCH domain-containing protein 14 (sut-2) (Caenorhabditis elegans).